The chain runs to 454 residues: tRNA(Ile)-lysidine synthase (454 aa).

Residue 27–32 (SGGSDS) coordinates ATP.

It belongs to the tRNA(Ile)-lysidine synthase family.

It localises to the cytoplasm. It carries out the reaction cytidine(34) in tRNA(Ile2) + L-lysine + ATP = lysidine(34) in tRNA(Ile2) + AMP + diphosphate + H(+). Functionally, ligates lysine onto the cytidine present at position 34 of the AUA codon-specific tRNA(Ile) that contains the anticodon CAU, in an ATP-dependent manner. Cytidine is converted to lysidine, thus changing the amino acid specificity of the tRNA from methionine to isoleucine. This is tRNA(Ile)-lysidine synthase from Mesorhizobium japonicum (strain LMG 29417 / CECT 9101 / MAFF 303099) (Mesorhizobium loti (strain MAFF 303099)).